The following is a 395-amino-acid chain: General transcription factor IIH subunit 2 (395 aa).

The VWFA domain occupies 60–236 (HLYVVVDGSR…HYKELLTHHV (177 aa)). Tyr95 is modified (phosphotyrosine). The segment at 291 to 308 (CPQCRAKYCELPVECKIC) adopts a C4-type zinc-finger fold.

It belongs to the GTF2H2 family. Component of the TFIID-containing RNA polymerase II pre-initiation complex that is composed of TBP and at least GTF2A1, GTF2A2, GTF2E1, GTF2E2, GTF2F1, GTF2H2, GTF2H3, GTF2H4, GTF2H5, GTF2B, TCEA1, ERCC2 and ERCC3. Component of the 7-subunit TFIIH core complex composed of XPB/ERCC3, XPD/ERCC2, GTF2H1, GTF2H2, GTF2H3, GTF2H4 and GTF2H5, which is active in NER. The core complex associates with the 3-subunit CDK-activating kinase (CAK) module composed of CCNH/cyclin H, CDK7 and MNAT1 to form the 10-subunit holoenzyme (holo-TFIIH) active in transcription. Interacts with XPB, XPD, GTF2H1 and GTF2H3.

The protein resides in the nucleus. In terms of biological role, component of the general transcription and DNA repair factor IIH (TFIIH) core complex, which is involved in general and transcription-coupled nucleotide excision repair (NER) of damaged DNA and, when complexed to CAK, in RNA transcription by RNA polymerase II. In NER, TFIIH acts by opening DNA around the lesion to allow the excision of the damaged oligonucleotide and its replacement by a new DNA fragment. In transcription, TFIIH has an essential role in transcription initiation. When the pre-initiation complex (PIC) has been established, TFIIH is required for promoter opening and promoter escape. Phosphorylation of the C-terminal tail (CTD) of the largest subunit of RNA polymerase II by the kinase module CAK controls the initiation of transcription. The N-terminus of GTF2H2 interacts with and regulates XPD whereas an intact C-terminus is required for a successful escape of RNAP II form the promoter. The chain is General transcription factor IIH subunit 2 (GTF2H2) from Bos taurus (Bovine).